The following is a 720-amino-acid chain: Calpain-12 (720 aa).

The 297-residue stretch at leucine 45 to serine 341 folds into the Calpain catalytic domain. Active-site residues include cysteine 105, histidine 259, and asparagine 283. Residues proline 342–alanine 541 are domain III. Residues aspartate 393–glycine 403 show a composition bias toward acidic residues. The disordered stretch occupies residues aspartate 393 to glycine 415. The interval leucine 542 to serine 720 is domain IV. The EF-hand domain maps to glycine 621–histidine 656. Aspartate 634, aspartate 636, serine 638, threonine 640, and glutamate 645 together coordinate Ca(2+).

This sequence belongs to the peptidase C2 family. As to expression, expression localized to the cortex of the hair follicle during the anagen phase of hair cycle.

In terms of biological role, calcium-regulated non-lysosomal thiol-protease. This Mus musculus (Mouse) protein is Calpain-12 (Capn12).